A 720-amino-acid chain; its full sequence is DNA gyrase subunit B (720 aa).

Low complexity predominate over residues 1–26; it reads MVDAMPENPAEEPTAASAAPNPEAVP. The tract at residues 1–42 is disordered; sequence MVDAMPENPAEEPTAASAAPNPEAVPDAVGQPEAPVKDRKVP. Positions 498–612 constitute a Toprim domain; it reads CEVYIVEGDS…AGHVFLAQPP (115 aa). Residues E504, D577, and D579 each contribute to the Mg(2+) site.

It belongs to the type II topoisomerase GyrB family. In terms of assembly, heterotetramer, composed of two GyrA and two GyrB chains. In the heterotetramer, GyrA contains the active site tyrosine that forms a transient covalent intermediate with the DNA, while GyrB binds cofactors and catalyzes ATP hydrolysis. Requires Mg(2+) as cofactor. Mn(2+) is required as a cofactor. It depends on Ca(2+) as a cofactor.

Its subcellular location is the cytoplasm. The enzyme catalyses ATP-dependent breakage, passage and rejoining of double-stranded DNA.. Its activity is regulated as follows. Supercoiling activity inhibited by novobiocin and coumermycin, DNA wrapping around gyrase is not inhibited. In terms of biological role, a type II topoisomerase that negatively supercoils DNA in an ATP-dependent manner. About 140 bp of DNA wraps around gyrase in the presence or absence of ATP, when ATP is added negative supercoils are made. A type II topoisomerase that negatively supercoils closed circular double-stranded (ds) DNA in an ATP-dependent manner to modulate DNA topology and maintain chromosomes in an underwound state. Negative supercoiling favors strand separation, and DNA replication, transcription, recombination and repair, all of which involve strand separation. Also able to catalyze the interconversion of other topological isomers of dsDNA rings, including catenanes and knotted rings. Type II topoisomerases break and join 2 DNA strands simultaneously in an ATP-dependent manner. The sequence is that of DNA gyrase subunit B from Micrococcus luteus (strain ATCC 4698 / DSM 20030 / JCM 1464 / CCM 169 / CCUG 5858 / IAM 1056 / NBRC 3333 / NCIMB 9278 / NCTC 2665 / VKM Ac-2230) (Micrococcus lysodeikticus).